Consider the following 141-residue polypeptide: MGMISEFRTFAVRGNVIDLAVGVIIGAAFGKIVDSVVNDLIMPLVGRVIGKLDFSSMFIVLADPPPGTPTTLDALKKAGVPVFAYGNFLTIVVNFLILAFIIFLMVRAFNRMRAAEPEAAPAAPPEEVVLLREIRDSLKTR.

Transmembrane regions (helical) follow at residues 16–36 (VIDL…VDSV), 40–60 (LIMP…MFIV), and 86–106 (GNFL…FLMV).

It belongs to the MscL family. In terms of assembly, homopentamer.

Its subcellular location is the cell inner membrane. Its function is as follows. Channel that opens in response to stretch forces in the membrane lipid bilayer. May participate in the regulation of osmotic pressure changes within the cell. The chain is Large-conductance mechanosensitive channel from Cupriavidus necator (strain ATCC 17699 / DSM 428 / KCTC 22496 / NCIMB 10442 / H16 / Stanier 337) (Ralstonia eutropha).